We begin with the raw amino-acid sequence, 286 residues long: 4-hydroxy-3-methylbut-2-enyl diphosphate reductase (286 aa).

Cys-12 is a binding site for [4Fe-4S] cluster. Residues His-46 and His-79 each coordinate (2E)-4-hydroxy-3-methylbut-2-enyl diphosphate. Residues His-46 and His-79 each coordinate dimethylallyl diphosphate. Residues His-46 and His-79 each coordinate isopentenyl diphosphate. Residue Cys-101 coordinates [4Fe-4S] cluster. Residue His-129 coordinates (2E)-4-hydroxy-3-methylbut-2-enyl diphosphate. His-129 contacts dimethylallyl diphosphate. Residue His-129 participates in isopentenyl diphosphate binding. The active-site Proton donor is Glu-131. Position 169 (Thr-169) interacts with (2E)-4-hydroxy-3-methylbut-2-enyl diphosphate. Cys-198 is a binding site for [4Fe-4S] cluster. (2E)-4-hydroxy-3-methylbut-2-enyl diphosphate-binding residues include Ser-226, Asn-228, and Ser-270. The dimethylallyl diphosphate site is built by Ser-226, Asn-228, and Ser-270. Positions 226, 228, and 270 each coordinate isopentenyl diphosphate.

The protein belongs to the IspH family. [4Fe-4S] cluster is required as a cofactor.

The enzyme catalyses isopentenyl diphosphate + 2 oxidized [2Fe-2S]-[ferredoxin] + H2O = (2E)-4-hydroxy-3-methylbut-2-enyl diphosphate + 2 reduced [2Fe-2S]-[ferredoxin] + 2 H(+). It catalyses the reaction dimethylallyl diphosphate + 2 oxidized [2Fe-2S]-[ferredoxin] + H2O = (2E)-4-hydroxy-3-methylbut-2-enyl diphosphate + 2 reduced [2Fe-2S]-[ferredoxin] + 2 H(+). Its pathway is isoprenoid biosynthesis; dimethylallyl diphosphate biosynthesis; dimethylallyl diphosphate from (2E)-4-hydroxy-3-methylbutenyl diphosphate: step 1/1. It participates in isoprenoid biosynthesis; isopentenyl diphosphate biosynthesis via DXP pathway; isopentenyl diphosphate from 1-deoxy-D-xylulose 5-phosphate: step 6/6. Functionally, catalyzes the conversion of 1-hydroxy-2-methyl-2-(E)-butenyl 4-diphosphate (HMBPP) into a mixture of isopentenyl diphosphate (IPP) and dimethylallyl diphosphate (DMAPP). Acts in the terminal step of the DOXP/MEP pathway for isoprenoid precursor biosynthesis. This chain is 4-hydroxy-3-methylbut-2-enyl diphosphate reductase, found in Solidesulfovibrio magneticus (strain ATCC 700980 / DSM 13731 / RS-1) (Desulfovibrio magneticus).